The sequence spans 114 residues: Class I hydrophobin 6 (114 aa).

The N-terminal stretch at 1-19 (MLFKQLILVATALTTLAVA) is a signal peptide. 4 cysteine pairs are disulfide-bonded: C33–C93, C40–C87, C41–C74, and C94–C107. N42 is a glycosylation site (N-linked (GlcNAc...) asparagine).

This sequence belongs to the fungal hydrophobin family. Self-assembles to form functional amyloid fibrils called rodlets. Self-assembly into fibrillar rodlets occurs spontaneously at hydrophobic:hydrophilic interfaces and the rodlets further associate laterally to form amphipathic monolayers.

It localises to the secreted. The protein localises to the cell wall. In terms of biological role, aerial growth, conidiation, and dispersal of filamentous fungi in the environment rely upon a capability of their secreting small amphipathic proteins called hydrophobins (HPBs) with low sequence identity. Class I can self-assemble into an outermost layer of rodlet bundles on aerial cell surfaces, conferring cellular hydrophobicity that supports fungal growth, development and dispersal; whereas Class II form highly ordered films at water-air interfaces through intermolecular interactions but contribute nothing to the rodlet structure. The chain is Class I hydrophobin 6 from Pleurotus ostreatus (strain PC15) (Oyster mushroom).